Consider the following 234-residue polypeptide: Ribosome-inactivating protein lychnin (234 aa).

C32 and C115 are joined by a disulfide. Residue E170 is part of the active site.

In terms of assembly, monomer.

The enzyme catalyses Endohydrolysis of the N-glycosidic bond at one specific adenosine on the 28S rRNA.. Functionally, ribosome-inactivating protein of type 1, inhibits protein synthesis in animal cells. Inhibits cell-free translation in rabbit reticulocyte lysate system with an IC(50) of 0.17 nM. In Silene chalcedonica (Maltese-cross), this protein is Ribosome-inactivating protein lychnin.